A 308-amino-acid polypeptide reads, in one-letter code: MQEIENLHQSVLLQEVLQAFTPLEEGVLVDCTLGLGGHSKALLSQKPHLKLIGIDKDKFAQEIAKERLKAFEGRYNLLSGGFAKRFKEALEIHGDRIKGVLVDLGVSSLQLDDDNRGFNFHSHALDMRMDLESDLNAQKVINSYPVIALEKIFRDYGEIKEYKKIAHKIAERRAKKPFKDAKDLSDFLSSFSKNKKIHPATLVFQAVRIEVNSELEELKEFLQCARNLNGAILCVISFHSLEDGLVKNAFKDYAKNCICDPLSFQCTCSNNHALGAILTKKPITPSPEEIKNNRRSRSAKMRVFQFKP.

S-adenosyl-L-methionine is bound by residues 36 to 38, aspartate 55, phenylalanine 86, aspartate 103, and glutamine 110; that span reads GGH.

The protein belongs to the methyltransferase superfamily. RsmH family.

The protein localises to the cytoplasm. It carries out the reaction cytidine(1402) in 16S rRNA + S-adenosyl-L-methionine = N(4)-methylcytidine(1402) in 16S rRNA + S-adenosyl-L-homocysteine + H(+). In terms of biological role, specifically methylates the N4 position of cytidine in position 1402 (C1402) of 16S rRNA. This Helicobacter pylori (strain G27) protein is Ribosomal RNA small subunit methyltransferase H.